We begin with the raw amino-acid sequence, 283 residues long: Pantothenate synthetase (283 aa).

30 to 37 (MGALHEGH) is an ATP binding site. The Proton donor role is filled by His37. A (R)-pantoate-binding site is contributed by Gln61. A beta-alanine-binding site is contributed by Gln61. 149–152 (GEKD) is an ATP binding site. Gln155 is a binding site for (R)-pantoate. ATP contacts are provided by residues Leu178 and 186-189 (RSSR).

It belongs to the pantothenate synthetase family. In terms of assembly, homodimer.

Its subcellular location is the cytoplasm. It carries out the reaction (R)-pantoate + beta-alanine + ATP = (R)-pantothenate + AMP + diphosphate + H(+). It participates in cofactor biosynthesis; (R)-pantothenate biosynthesis; (R)-pantothenate from (R)-pantoate and beta-alanine: step 1/1. Its function is as follows. Catalyzes the condensation of pantoate with beta-alanine in an ATP-dependent reaction via a pantoyl-adenylate intermediate. The sequence is that of Pantothenate synthetase from Christiangramia forsetii (strain DSM 17595 / CGMCC 1.15422 / KT0803) (Gramella forsetii).